Reading from the N-terminus, the 24-residue chain is Metallothionein (24 aa).

7 residues coordinate Cd(2+): Cys-3, Cys-5, Cys-8, Cys-10, Cys-17, Cys-19, and Cys-22.

It belongs to the metallothionein superfamily. Type 8 family. Post-translationally, contains 4 disulfide bonds.

Functionally, metallothioneins have a high content of cysteine residues that bind various heavy metals. The protein is Metallothionein of Neonectria lugdunensis (Aquatic fungus).